The chain runs to 101 residues: NAD(P)H-quinone oxidoreductase subunit 4L, chloroplastic (101 aa).

A run of 3 helical transmembrane segments spans residues 2 to 22 (MLEHVLILSAYLFSIGIYGLI), 27 to 46 (MVRALMCLELILNAVNMNLI), and 61 to 81 (IFSIFVIAIAAAEAAIGPAIV).

It belongs to the complex I subunit 4L family. NDH is composed of at least 16 different subunits, 5 of which are encoded in the nucleus.

The protein resides in the plastid. It localises to the chloroplast thylakoid membrane. The enzyme catalyses a plastoquinone + NADH + (n+1) H(+)(in) = a plastoquinol + NAD(+) + n H(+)(out). It carries out the reaction a plastoquinone + NADPH + (n+1) H(+)(in) = a plastoquinol + NADP(+) + n H(+)(out). In terms of biological role, NDH shuttles electrons from NAD(P)H:plastoquinone, via FMN and iron-sulfur (Fe-S) centers, to quinones in the photosynthetic chain and possibly in a chloroplast respiratory chain. The immediate electron acceptor for the enzyme in this species is believed to be plastoquinone. Couples the redox reaction to proton translocation, and thus conserves the redox energy in a proton gradient. The protein is NAD(P)H-quinone oxidoreductase subunit 4L, chloroplastic of Drimys granadensis.